The sequence spans 118 residues: UPF0102 protein Franean1_1156 (118 aa).

It belongs to the UPF0102 family.

The polypeptide is UPF0102 protein Franean1_1156 (Parafrankia sp. (strain EAN1pec)).